The following is a 479-amino-acid chain: Proline--tRNA ligase (479 aa).

The protein belongs to the class-II aminoacyl-tRNA synthetase family. ProS type 3 subfamily. In terms of assembly, homodimer.

Its subcellular location is the cytoplasm. The catalysed reaction is tRNA(Pro) + L-proline + ATP = L-prolyl-tRNA(Pro) + AMP + diphosphate. Functionally, catalyzes the attachment of proline to tRNA(Pro) in a two-step reaction: proline is first activated by ATP to form Pro-AMP and then transferred to the acceptor end of tRNA(Pro). In Mesomycoplasma hyopneumoniae (strain 7448) (Mycoplasma hyopneumoniae), this protein is Proline--tRNA ligase.